Here is an 804-residue protein sequence, read N- to C-terminus: DNA mismatch repair protein MutS (804 aa).

Position 614 to 621 (614 to 621 (GPNMAGKS)) interacts with ATP.

The protein belongs to the DNA mismatch repair MutS family.

Functionally, this protein is involved in the repair of mismatches in DNA. It is possible that it carries out the mismatch recognition step. This protein has a weak ATPase activity. The polypeptide is DNA mismatch repair protein MutS (Ehrlichia chaffeensis (strain ATCC CRL-10679 / Arkansas)).